The sequence spans 268 residues: Ribosomal RNA small subunit methyltransferase A (268 aa).

S-adenosyl-L-methionine is bound by residues asparagine 21, leucine 23, glycine 48, glutamate 69, aspartate 94, and asparagine 115.

It belongs to the class I-like SAM-binding methyltransferase superfamily. rRNA adenine N(6)-methyltransferase family. RsmA subfamily.

It localises to the cytoplasm. It carries out the reaction adenosine(1518)/adenosine(1519) in 16S rRNA + 4 S-adenosyl-L-methionine = N(6)-dimethyladenosine(1518)/N(6)-dimethyladenosine(1519) in 16S rRNA + 4 S-adenosyl-L-homocysteine + 4 H(+). Its function is as follows. Specifically dimethylates two adjacent adenosines (A1518 and A1519) in the loop of a conserved hairpin near the 3'-end of 16S rRNA in the 30S particle. May play a critical role in biogenesis of 30S subunits. The chain is Ribosomal RNA small subunit methyltransferase A from Saccharophagus degradans (strain 2-40 / ATCC 43961 / DSM 17024).